The chain runs to 286 residues: Shikimate dehydrogenase (NADP(+)) (286 aa).

Residues 20-22 and threonine 67 each bind shikimate; that span reads SLS. Lysine 71 serves as the catalytic Proton acceptor. Asparagine 92 and aspartate 107 together coordinate shikimate. NADP(+)-binding positions include 132–136 and methionine 228; that span reads GAGGA. Tyrosine 230 is a shikimate binding site. Glycine 251 lines the NADP(+) pocket.

It belongs to the shikimate dehydrogenase family. As to quaternary structure, homodimer.

The enzyme catalyses shikimate + NADP(+) = 3-dehydroshikimate + NADPH + H(+). Its pathway is metabolic intermediate biosynthesis; chorismate biosynthesis; chorismate from D-erythrose 4-phosphate and phosphoenolpyruvate: step 4/7. Involved in the biosynthesis of the chorismate, which leads to the biosynthesis of aromatic amino acids. Catalyzes the reversible NADPH linked reduction of 3-dehydroshikimate (DHSA) to yield shikimate (SA). This chain is Shikimate dehydrogenase (NADP(+)), found in Geobacter metallireducens (strain ATCC 53774 / DSM 7210 / GS-15).